The chain runs to 747 residues: ESX-1 secretion system protein EccCa1 (747 aa).

Transmembrane regions (helical) follow at residues 41 to 61 (ILPY…VAGG), 65 to 85 (LSPY…GGLA), and 222 to 242 (FPTI…TAMI). Residues 456–665 (GNVMYLDIKE…LRTTSSHESK (210 aa)) form the FtsK domain. ATP is bound at residue 479-486 (GTTGSGKS).

Part of the ESX-1 / type VII secretion system (T7SS), which is composed of cytosolic and membrane components. The ESX-1 membrane complex is composed of EccB1, EccCa1, EccCb1, EccD1 and EccE1.

It localises to the cell inner membrane. Its function is as follows. Part of the ESX-1 specialized secretion system, which delivers several virulence factors to host cells during infection, including the key virulence factors EsxA (ESAT-6) and EsxB (CFP-10). This is ESX-1 secretion system protein EccCa1 from Mycobacterium tuberculosis (strain CDC 1551 / Oshkosh).